A 173-amino-acid chain; its full sequence is Co-chaperone protein HscB homolog (173 aa).

The 73-residue stretch at 5-77 folds into the J domain; the sequence is CHFALFELQP…AQRARYLLTI (73 aa).

It belongs to the HscB family. In terms of assembly, interacts with HscA and stimulates its ATPase activity.

Its function is as follows. Co-chaperone involved in the maturation of iron-sulfur cluster-containing proteins. Seems to help targeting proteins to be folded toward HscA. This Pseudomonas fluorescens (strain Pf0-1) protein is Co-chaperone protein HscB homolog.